A 493-amino-acid chain; its full sequence is MKQIQFKLNATTDLQSFDTLILPVFDQGQSTQLAKEAHLQELTQTLFNQGDFLAKPGQTQMLFQPAKIDCARLLLVGMGDPKTLTVKGYLESLNAAAKALDNSGAVNVLNTLIECIPAKNDQAWAIYQNTLAFQRSLYDYEHESRNKKTPKEPKLNSMTYAAEATAENEKAVNQAQASALGMALTQDLANMPSNYCTPTYLAETAEAMAKTYGFDVNILEQDEMIKMGMGSFMAVAQGAHTPPKMICLSYQGADASEAPIALVGKGVTFDTGGISLKPGEAMDEMKYDMGGAATVLGVFEALGRLKPKLNVVAVIPSTENMPAGNAIKPGDVVKSLSGQTIEILNTDAEGRLILCDALTYTQQTYKPSKIVDMATLTGACIIALGHQMSAVLGNDQSLVDALVASGQKTYDRFWQMPLSEEYDEQLKSNFADMANIGGRAAGTITAAQFLARFTKEVNWAHLDIAGTAWISGKDKGATGRPVPALVDFLLEQI.

Mn(2+) is bound by residues K265 and D270. K277 is a catalytic residue. 3 residues coordinate Mn(2+): D288, D347, and E349. The active site involves R351.

This sequence belongs to the peptidase M17 family. It depends on Mn(2+) as a cofactor.

The protein resides in the cytoplasm. It catalyses the reaction Release of an N-terminal amino acid, Xaa-|-Yaa-, in which Xaa is preferably Leu, but may be other amino acids including Pro although not Arg or Lys, and Yaa may be Pro. Amino acid amides and methyl esters are also readily hydrolyzed, but rates on arylamides are exceedingly low.. The catalysed reaction is Release of an N-terminal amino acid, preferentially leucine, but not glutamic or aspartic acids.. In terms of biological role, presumably involved in the processing and regular turnover of intracellular proteins. Catalyzes the removal of unsubstituted N-terminal amino acids from various peptides. The chain is Probable cytosol aminopeptidase from Hydrogenovibrio crunogenus (strain DSM 25203 / XCL-2) (Thiomicrospira crunogena).